A 140-amino-acid chain; its full sequence is Large ribosomal subunit protein uL11 (140 aa).

It belongs to the universal ribosomal protein uL11 family. In terms of assembly, part of the ribosomal stalk of the 50S ribosomal subunit. Interacts with L10 and the large rRNA to form the base of the stalk. L10 forms an elongated spine to which L12 dimers bind in a sequential fashion forming a multimeric L10(L12)X complex. Post-translationally, one or more lysine residues are methylated.

Forms part of the ribosomal stalk which helps the ribosome interact with GTP-bound translation factors. In Desulfovibrio desulfuricans (strain ATCC 27774 / DSM 6949 / MB), this protein is Large ribosomal subunit protein uL11.